Consider the following 390-residue polypeptide: Copper-containing nitrite reductase (390 aa).

The signal sequence occupies residues M1–A18. A lipid anchor (N-palmitoyl cysteine) is attached at C19. The S-diacylglycerol cysteine moiety is linked to residue C19. The tract at residues E30–S51 is disordered. Plastocyanin-like domains are found at residues W101–E195 and G245–E346. H134, H139, H174, C175, H183, and M188 together coordinate Cu cation. Residue H139 participates in substrate binding. H280 provides a ligand contact to substrate. H329 contributes to the Cu cation binding site. Positions G367 to Y390 are disordered. The segment covering A368–Y390 has biased composition (low complexity). 3 tandem repeats follow at residues A371–P375, A376–P380, and A381–S385. Residues A371 to S385 form a 3 X 5 AA tandem repeats of A-A-S-A-P region.

It belongs to the multicopper oxidase family. As to quaternary structure, homotrimer. It depends on Cu(+) as a cofactor. Cu(2+) serves as cofactor.

The protein resides in the cell outer membrane. It carries out the reaction nitric oxide + Fe(III)-[cytochrome c] + H2O = Fe(II)-[cytochrome c] + nitrite + 2 H(+). Catalyzes the reduction of nitrite to nitric oxide (NO). It could be essential for growth and survival in oxygen-depleted environments. This is Copper-containing nitrite reductase (aniA) from Neisseria meningitidis serogroup B (strain ATCC BAA-335 / MC58).